Consider the following 355-residue polypeptide: Heat-inducible transcription repressor HrcA (355 aa).

It belongs to the HrcA family.

Functionally, negative regulator of class I heat shock genes (grpE-dnaK-dnaJ and groELS operons). Prevents heat-shock induction of these operons. The sequence is that of Heat-inducible transcription repressor HrcA from Nitratidesulfovibrio vulgaris (strain DP4) (Desulfovibrio vulgaris).